We begin with the raw amino-acid sequence, 503 residues long: TGF-beta receptor type-1 (503 aa).

The N-terminal stretch at 1–29 (MEVAAGAPRSRLLLFVLAATATLAPEATA) is a signal peptide. Over 30 to 126 (FQCFCHLCTK…PPSGLGPVEL (97 aa)) the chain is Extracellular. 5 disulfide bridges follow: C32-C50, C34-C37, C44-C67, C82-C96, and C97-C102. N41 is a glycosylation site (N-linked (GlcNAc...) asparagine). A helical transmembrane segment spans residues 127 to 147 (AAVIAGPVCFVCISLMLMVYI). The Cytoplasmic portion of the chain corresponds to 148-503 (CHNRTVIHHR…QLSQQEGIKM (356 aa)). S165 carries the phosphoserine modification. One can recognise a GS domain in the interval 175–204 (TTLKDLIYDMTTSGSGSGLPLLVQRTIART). Phosphothreonine; by TGFBR2 occurs at positions 185 and 186. Residues S187, S189, and S191 each carry the phosphoserine; by TGFBR2 modification. An FKBP1A-binding motif is present at residues 193–194 (LP). Residues 205-495 (IVLQESIGKG…LRIKKTLSQL (291 aa)) enclose the Protein kinase domain. Residues 211 to 219 (IGKGRFGEV) and K232 contribute to the ATP site. Residue D333 is the Proton acceptor of the active site. K391 is covalently cross-linked (Glycyl lysine isopeptide (Lys-Gly) (interchain with G-Cter in SUMO)).

It belongs to the protein kinase superfamily. TKL Ser/Thr protein kinase family. TGFB receptor subfamily. As to quaternary structure, homodimer; in the endoplasmic reticulum but also at the cell membrane. Heterohexamer; TGFB1, TGFB2 and TGFB3 homodimeric ligands assemble a functional receptor composed of two TGFBR1 and TGFBR2 heterodimers to form a ligand-receptor heterohexamer. The respective affinity of TGBRB1 and TGFBR2 for the ligands may modulate the kinetics of assembly of the receptor and may explain the different biological activities of TGFB1, TGFB2 and TGFB3. Component of a complex composed of TSC22D1 (via N-terminus), TGFBR1 and TGFBR2; the interaction between TSC22D1 and TGFBR1 is inhibited by SMAD7 and promoted by TGFB1. Interacts with CD109; inhibits TGF-beta receptor activation in keratinocytes. Interacts with RBPMS. Interacts (unphosphorylated) with FKBP1A; prevents TGFBR1 phosphorylation by TGFBR2 and stabilizes it in the inactive conformation. Interacts with SMAD2, SMAD3 and ZFYVE9; ZFYVE9 recruits SMAD2 and SMAD3 to the TGF-beta receptor. Interacts with TRAF6 and MAP3K7; induces MAP3K7 activation by TRAF6. Interacts with PARD6A; involved in TGF-beta induced epithelial to mesenchymal transition. Interacts with NEDD4L. Interacts with SMAD7, SMURF1 and SMURF2; SMAD7 recruits NEDD4L, SMURF1 and SMURF2 to the TGF-beta receptor. Interacts with USP15 and VPS39. Interacts with SDCBP (via C-terminus). Interacts with CAV1 and this interaction is impaired in the presence of SDCBP. Interacts with APPL1; interaction is TGF beta dependent; mediates trafficking of the TGFBR1 from the endosomes to the nucleus via microtubules in a TRAF6-dependent manner. Interacts with GPR50; this interaction promotes the constitutive activation of SMAD signaling pathway. Requires Mg(2+) as cofactor. It depends on Mn(2+) as a cofactor. Phosphorylated at basal levels in the absence of ligand. Activated upon phosphorylation by TGFBR2, mainly in the GS domain. Phosphorylation in the GS domain abrogates FKBP1A-binding. In terms of processing, N-Glycosylated. Post-translationally, ubiquitinated; undergoes ubiquitination catalyzed by several E3 ubiquitin ligases including SMURF1, SMURF2 and NEDD4L2. Results in the proteasomal and/or lysosomal degradation of the receptor thereby negatively regulating its activity. Deubiquitinated by USP15, leading to stabilization of the protein and enhanced TGF-beta signal. Its ubiquitination and proteasome-mediated degradation is negatively regulated by SDCBP.

The protein resides in the cell membrane. It localises to the cell junction. Its subcellular location is the tight junction. The protein localises to the membrane raft. It is found in the cell surface. The enzyme catalyses L-threonyl-[receptor-protein] + ATP = O-phospho-L-threonyl-[receptor-protein] + ADP + H(+). It carries out the reaction L-seryl-[receptor-protein] + ATP = O-phospho-L-seryl-[receptor-protein] + ADP + H(+). With respect to regulation, kept in an inactive conformation by FKBP1A preventing receptor activation in absence of ligand. CD109 is another inhibitor of the receptor. Functionally, transmembrane serine/threonine kinase forming with the TGF-beta type II serine/threonine kinase receptor, TGFBR2, the non-promiscuous receptor for the TGF-beta cytokines TGFB1, TGFB2 and TGFB3. Transduces the TGFB1, TGFB2 and TGFB3 signal from the cell surface to the cytoplasm and is thus regulating a plethora of physiological and pathological processes including cell cycle arrest in epithelial and hematopoietic cells, control of mesenchymal cell proliferation and differentiation, wound healing, extracellular matrix production, immunosuppression and carcinogenesis. The formation of the receptor complex composed of 2 TGFBR1 and 2 TGFBR2 molecules symmetrically bound to the cytokine dimer results in the phosphorylation and the activation of TGFBR1 by the constitutively active TGFBR2. Activated TGFBR1 phosphorylates SMAD2 which dissociates from the receptor and interacts with SMAD4. The SMAD2-SMAD4 complex is subsequently translocated to the nucleus where it modulates the transcription of the TGF-beta-regulated genes. This constitutes the canonical SMAD-dependent TGF-beta signaling cascade. Also involved in non-canonical, SMAD-independent TGF-beta signaling pathways. For instance, TGFBR1 induces TRAF6 autoubiquitination which in turn results in MAP3K7 ubiquitination and activation to trigger apoptosis. Also regulates epithelial to mesenchymal transition through a SMAD-independent signaling pathway through PARD6A phosphorylation and activation. The protein is TGF-beta receptor type-1 (TGFBR1) of Sus scrofa (Pig).